Here is a 274-residue protein sequence, read N- to C-terminus: tRNA pseudouridine synthase A (274 aa).

Residue D51 is the Nucleophile of the active site. Residue Y109 participates in substrate binding.

Belongs to the tRNA pseudouridine synthase TruA family. Homodimer.

It catalyses the reaction uridine(38/39/40) in tRNA = pseudouridine(38/39/40) in tRNA. In terms of biological role, formation of pseudouridine at positions 38, 39 and 40 in the anticodon stem and loop of transfer RNAs. In Acidovorax ebreus (strain TPSY) (Diaphorobacter sp. (strain TPSY)), this protein is tRNA pseudouridine synthase A.